The chain runs to 37 residues: Large ribosomal subunit protein bL36 (37 aa).

This sequence belongs to the bacterial ribosomal protein bL36 family.

In Aliivibrio fischeri (strain ATCC 700601 / ES114) (Vibrio fischeri), this protein is Large ribosomal subunit protein bL36.